Reading from the N-terminus, the 448-residue chain is MAEPRQEFDVMEDHAQGDYTLQDQEGDMDPGLKESPLQTPADDGSEEPGSETSDAKSTPTAEDATAPLVDEGAPGEQAAAQAPAEIPEGTAAEEAGIGDTSNLEDQAAGHVTQARMVSKGKDGTGPDDKKTKGADGKPGTKIATPRGAAPPGQKGQANATRIPAKTTPTPKTSPATMQVQKKPPPAGAKSERGESGKSGDRSGYSSPGSPGTPGSRSRTPSLPTPPTREPKKVAVVRTPPKSPSAAKSRLQAAPGPMPDLKNVKSKIGSTENLKHQPGGGKVQIINKKLDLSNVQSKCGSKDNIKHVPGGGSVQIVYKPVDLSKVTSKCGSLGNIHHKPGGGQVEVKSEKLDFKDRVQSKIGSLDNITHVPGGGNKKIETHKLTFRENAKAKTDHGAEIVYKSPVVSGDTSPRHLSNVSSTGSIDMVDSPQLATLADEVSASLAKQGL.

Residues 1–16 (MAEPRQEFDVMEDHAQ) are compositionally biased toward basic and acidic residues. The disordered stretch occupies residues 1–264 (MAEPRQEFDV…GPMPDLKNVK (264 aa)). Alanine 2 is modified (N-acetylalanine). Tyrosine 19 carries the post-translational modification Phosphotyrosine. Lysine 33 is covalently cross-linked (Glycyl lysine isopeptide (Lys-Gly) (interchain with G-Cter in ubiquitin)). 2 positions are modified to phosphoserine: serine 35 and serine 50. Residues 50 to 60 (SETSDAKSTPT) are compositionally biased toward polar residues. Phosphothreonine is present on residues threonine 58 and threonine 60. Low complexity predominate over residues 71–89 (EGAPGEQAAAQAPAEIPEG). Phosphothreonine is present on threonine 100. Positions 119–135 (KGKDGTGPDDKKTKGAD) are enriched in basic and acidic residues. A Phosphothreonine modification is found at threonine 144. At arginine 146 the chain carries Omega-N-methylarginine. Residue lysine 154 is modified to N6,N6-dimethyllysine; alternate. N6-acetyllysine; alternate is present on lysine 154. 4 positions are modified to phosphothreonine: threonine 160, threonine 166, threonine 167, and threonine 172. Positions 163–176 (PAKTTPTPKTSPAT) are enriched in low complexity. Over residues 189-200 (KSERGESGKSGD) the composition is skewed to basic and acidic residues. Residues serine 198 and serine 202 each carry the phosphoserine modification. The segment covering 201–221 (RSGYSSPGSPGTPGSRSRTPS) has biased composition (low complexity). At tyrosine 204 the chain carries Phosphotyrosine. Serine 205, serine 206, and serine 209 each carry phosphoserine. 2 positions are modified to phosphothreonine: threonine 212 and threonine 219. Serine 221 is subject to Phosphoserine. Threonine 224 is modified (phosphothreonine). At lysine 232 the chain carries N6-acetyllysine. The residue at position 238 (threonine 238) is a Phosphothreonine. A phosphoserine mark is found at serine 242 and serine 244. 4 Tau/MAP repeats span residues 251–281 (QAAP…GGGK), 282–312 (VQII…GGGS), 313–343 (VQIV…GGGQ), and 344–375 (VEVK…GGGN). Residue lysine 261 forms a Glycyl lysine isopeptide (Lys-Gly) (interchain with G-Cter in ubiquitin) linkage. An N6-acetyllysine; alternate modification is found at lysine 266. An N6-methyllysine; alternate modification is found at lysine 266. Lysine 266 is covalently cross-linked (Glycyl lysine isopeptide (Lys-Gly) (interchain with G-Cter in ubiquitin); alternate). Position 269 is a phosphoserine (serine 269). Lysine 274 participates in a covalent cross-link: Glycyl lysine isopeptide (Lys-Gly) (interchain with G-Cter in ubiquitin). Lysine 288 is modified (N6-acetyllysine; alternate). Lysine 288 is covalently cross-linked (Glycyl lysine isopeptide (Lys-Gly) (interchain with G-Cter in ubiquitin); alternate). Phosphoserine occurs at positions 292 and 296. At lysine 297 the chain carries N6-acetyllysine. Cysteine 298 and cysteine 329 form a disulfide bridge. Position 300 is a phosphoserine (serine 300). The residue at position 305 (lysine 305) is an N6-acetyllysine; alternate. Lysine 305 is covalently cross-linked (Glycyl lysine isopeptide (Lys-Gly) (interchain with G-Cter in ubiquitin); alternate). Serine 312 carries the phosphoserine modification. Lysine 318 carries the post-translational modification N6,N6-dimethyllysine; alternate. Residues lysine 318, lysine 324, and lysine 328 each carry the N6-acetyllysine; alternate modification. Residues lysine 318, lysine 324, and lysine 328 each participate in a glycyl lysine isopeptide (Lys-Gly) (interchain with G-Cter in ubiquitin); alternate cross-link. Serine 331 is subject to Phosphoserine. N6-acetyllysine; alternate occurs at positions 338, 350, and 354. Glycyl lysine isopeptide (Lys-Gly) (interchain with G-Cter in ubiquitin); alternate cross-links involve residues lysine 338, lysine 350, and lysine 354. Omega-N-methylarginine is present on arginine 356. Serine 359 carries the phosphoserine modification. Lysine 360 is covalently cross-linked (Glycyl lysine isopeptide (Lys-Gly) (interchain with G-Cter in ubiquitin)). At serine 363 the chain carries Phosphoserine. An N6-acetyllysine; alternate modification is found at lysine 376. Lysine 376 is covalently cross-linked (Glycyl lysine isopeptide (Lys-Gly) (interchain with G-Cter in ubiquitin); alternate). A Glycyl lysine isopeptide (Lys-Gly) (interchain with G-Cter in ubiquitin) cross-link involves residue lysine 382. Residue lysine 392 is modified to N6-acetyllysine; alternate. Residue lysine 392 forms a Glycyl lysine isopeptide (Lys-Gly) (interchain with G-Cter in ubiquitin); alternate linkage. The residue at position 401 (tyrosine 401) is a Phosphotyrosine. 2 positions are modified to phosphoserine: serine 403 and serine 407. Residues 405-424 (VVSGDTSPRHLSNVSSTGSI) are disordered. The segment covering 408–423 (GDTSPRHLSNVSSTGS) has biased composition (polar residues). Threonine 410 carries the phosphothreonine modification. Phosphoserine occurs at positions 411, 416, 423, and 429. Threonine 434 carries the phosphothreonine modification.

In terms of assembly, interacts with MARK1, MARK2, MARK3 and MARK4. Interacts with SQSTM1 when polyubiquitinated. Interacts with PSMC2 through SQSTM1. Interacts with FKBP4. Binds to CSNK1D. Interacts with SGK1. Interacts with PIN1. Interacts with LRRK2. Interacts with LRP1, leading to endocytosis; this interaction is reduced in the presence of LRPAP1/RAP. Polyubiquitinated. Requires functional TRAF6 and may provoke SQSTM1-dependent degradation by the proteasome. In terms of processing, phosphorylation at various serine and threonine residues in S-P or T-P motifs by proline-directed protein kinases (PDPK1, CDK1, CDK5, GSK3, MAPK) (a few sites per protein in interphase, more in mitosis), and at serine residues in K-X-G-S motifs by MAP/microtubule affinity-regulating kinase (MARK1, MARK2, MARK3, MARK4), causing detachment from microtubules, and their disassembly. Phosphorylation at Ser-269 by BRSK1 and BRSK2 in neurons affects ability to bind microtubules and plays a role in neuron polarization. Phosphorylated by PHK. Dephosphorylation at several serine and threonine residues by the serine/threonine phosphatase PPP5C. Post-translationally, O-glycosylated; contains at least 4 GlcNAc. Site-specific or stoichiometric changes in glycosylation may modulate tau function and also play a role in PHF's formation. As to expression, expressed in neurons.

Its subcellular location is the cytoplasm. The protein localises to the cytosol. It localises to the cell membrane. The protein resides in the cytoskeleton. It is found in the cell projection. Its subcellular location is the axon. The protein localises to the dendrite. It localises to the secreted. Promotes microtubule assembly and stability, and might be involved in the establishment and maintenance of neuronal polarity. The C-terminus binds axonal microtubules while the N-terminus binds neural plasma membrane components, suggesting that tau functions as a linker protein between both. Axonal polarity is predetermined by tau localization (in the neuronal cell) in the domain of the cell body defined by the centrosome. The short isoforms allow plasticity of the cytoskeleton whereas the longer isoforms may preferentially play a role in its stabilization. This is Microtubule-associated protein tau (MAPT) from Bos taurus (Bovine).